A 119-amino-acid chain; its full sequence is NADH-quinone oxidoreductase subunit A (119 aa).

Helical transmembrane passes span 7-27 (FPVLLFILVGIGVGLVPMFLG), 63-83 (LIAILFILFDLETAFLFPWGV), and 88-108 (IGWFGYASMVIFLLEFIVGFV).

It belongs to the complex I subunit 3 family. NDH-1 is composed of 14 different subunits. Subunits NuoA, H, J, K, L, M, N constitute the membrane sector of the complex.

It localises to the cell membrane. The catalysed reaction is a quinone + NADH + 5 H(+)(in) = a quinol + NAD(+) + 4 H(+)(out). Its function is as follows. NDH-1 shuttles electrons from NADH, via FMN and iron-sulfur (Fe-S) centers, to quinones in the respiratory chain. The immediate electron acceptor for the enzyme in this species is believed to be ubiquinone. Couples the redox reaction to proton translocation (for every two electrons transferred, four hydrogen ions are translocated across the cytoplasmic membrane), and thus conserves the redox energy in a proton gradient. In Polynucleobacter asymbioticus (strain DSM 18221 / CIP 109841 / QLW-P1DMWA-1) (Polynucleobacter necessarius subsp. asymbioticus), this protein is NADH-quinone oxidoreductase subunit A.